Here is a 121-residue protein sequence, read N- to C-terminus: Large ribosomal subunit protein eL8 (121 aa).

This sequence belongs to the eukaryotic ribosomal protein eL8 family. In terms of assembly, part of the 50S ribosomal subunit. Probably part of the RNase P complex.

The protein resides in the cytoplasm. In terms of biological role, multifunctional RNA-binding protein that recognizes the K-turn motif in ribosomal RNA, the RNA component of RNase P, box H/ACA, box C/D and box C'/D' sRNAs. The protein is Large ribosomal subunit protein eL8 of Thermoplasma acidophilum (strain ATCC 25905 / DSM 1728 / JCM 9062 / NBRC 15155 / AMRC-C165).